Here is a 350-residue protein sequence, read N- to C-terminus: S-adenosylmethionine:tRNA ribosyltransferase-isomerase (350 aa).

Belongs to the QueA family. In terms of assembly, monomer.

The protein resides in the cytoplasm. The catalysed reaction is 7-aminomethyl-7-carbaguanosine(34) in tRNA + S-adenosyl-L-methionine = epoxyqueuosine(34) in tRNA + adenine + L-methionine + 2 H(+). It participates in tRNA modification; tRNA-queuosine biosynthesis. In terms of biological role, transfers and isomerizes the ribose moiety from AdoMet to the 7-aminomethyl group of 7-deazaguanine (preQ1-tRNA) to give epoxyqueuosine (oQ-tRNA). In Bacillus cereus (strain 03BB102), this protein is S-adenosylmethionine:tRNA ribosyltransferase-isomerase.